We begin with the raw amino-acid sequence, 452 residues long: Membrane-bound acylglycerophosphatidylinositol O-acyltransferase mboa-7 (452 aa).

4 helical membrane-spanning segments follow: residues 4-24, 53-73, 79-99, and 104-124; these read IIGL…FSFA, PRIA…AFAP, FYVF…HYFL, and VASH…GITF. An N-linked (GlcNAc...) asparagine glycan is attached at asparagine 137. 3 helical membrane passes run 153–173, 220–240, and 244–264; these read FAYF…YQML, AIWE…FVVF, and VYSA…GIYP. Asparagine 319 carries an N-linked (GlcNAc...) asparagine glycan. The active site involves histidine 350. A helical transmembrane segment spans residues 354 to 374; the sequence is AGYFMSFGVVAMCAILEDVIF. N-linked (GlcNAc...) asparagine glycosylation occurs at asparagine 414. A helical membrane pass occupies residues 421–441; that stretch reads FWSSIYYWLPLLCVPFYIYSV.

The protein belongs to the membrane-bound acyltransferase family.

The protein resides in the membrane. It carries out the reaction a 1-acyl-sn-glycero-3-phospho-(1D-myo-inositol) + an acyl-CoA = a 1,2-diacyl-sn-glycero-3-phospho-(1D-myo-inositol) + CoA. The catalysed reaction is a fatty acyl-[ACP] + a 1-acyl-sn-glycero-3-phosphate = a 1,2-diacyl-sn-glycero-3-phosphate + holo-[ACP]. It participates in lipid metabolism; phospholipid metabolism. Acyltransferase which mediates the conversion of lysophosphatidylinositol (1-acylglycerophosphatidylinositol or LPI) into phosphatidylinositol (1,2-diacyl-sn-glycero-3-phosphoinositol or PI) (LPIAT activity). Prefers arachidonoyl-CoA or eicosapentaenoic acid (EPA) as the acyl donor. Prefers sn-2-LPI rather than sn-1-LPI as the acyl acceptor. Lysophospholipid acyltransferases (LPLATs) catalyze the reacylation step of the phospholipid remodeling pathway also known as the Lands cycle. The protein is Membrane-bound acylglycerophosphatidylinositol O-acyltransferase mboa-7 of Caenorhabditis briggsae.